A 243-amino-acid polypeptide reads, in one-letter code: UPF0758 protein PCC7424_2073 (243 aa).

Positions 112-235 (VEINDPVSAV…HQSLRTVTDL (124 aa)) constitute an MPN domain. The Zn(2+) site is built by histidine 184, histidine 186, and aspartate 197. Residues 184-197 (HNHPSGNVAPSQED) carry the JAMM motif motif.

It belongs to the UPF0758 family.

This Gloeothece citriformis (strain PCC 7424) (Cyanothece sp. (strain PCC 7424)) protein is UPF0758 protein PCC7424_2073.